A 397-amino-acid polypeptide reads, in one-letter code: Succinate--CoA ligase [ADP-forming] subunit beta (397 aa).

The 246-residue stretch at 9–254 (KALLKSFGAP…KSEEDEKEIQ (246 aa)) folds into the ATP-grasp domain. Residues Lys-46, 53 to 55 (GRG), Glu-109, Ala-112, and Glu-117 contribute to the ATP site. The Mg(2+) site is built by Asn-209 and Asp-223. Substrate contacts are provided by residues Asn-274 and 331–333 (GIM).

Belongs to the succinate/malate CoA ligase beta subunit family. As to quaternary structure, heterotetramer of two alpha and two beta subunits. Mg(2+) is required as a cofactor.

The catalysed reaction is succinate + ATP + CoA = succinyl-CoA + ADP + phosphate. The enzyme catalyses GTP + succinate + CoA = succinyl-CoA + GDP + phosphate. Its pathway is carbohydrate metabolism; tricarboxylic acid cycle; succinate from succinyl-CoA (ligase route): step 1/1. In terms of biological role, succinyl-CoA synthetase functions in the citric acid cycle (TCA), coupling the hydrolysis of succinyl-CoA to the synthesis of either ATP or GTP and thus represents the only step of substrate-level phosphorylation in the TCA. The beta subunit provides nucleotide specificity of the enzyme and binds the substrate succinate, while the binding sites for coenzyme A and phosphate are found in the alpha subunit. The chain is Succinate--CoA ligase [ADP-forming] subunit beta from Rhizobium rhizogenes (strain K84 / ATCC BAA-868) (Agrobacterium radiobacter).